Consider the following 67-residue polypeptide: MKPSLAADEMFSEGPGYMEMDESGGATGMMMDHLPSNDKHVHADFYNDFDDLFDEDNWAKMKTDGKQ.

Residues 1–31 (MKPSLAADEMFSEGPGYMEMDESGGATGMMM) form a disordered region.

Belongs to the CSN9 family. Probable component of the COP9 signalosome (CSN) complex.

Component of the COP9 signalosome complex (CSN), a complex involved in various cellular and developmental processes. The CSN complex is an essential regulator of the ubiquitin (Ubl) conjugation pathway by mediating the deneddylation of the cullin subunits of SCF-type E3 ligase complexes, leading to decrease the Ubl ligase activity. This chain is COP9 signalosome complex subunit 9 homolog, found in Drosophila melanogaster (Fruit fly).